We begin with the raw amino-acid sequence, 251 residues long: 5'-nucleotidase SurE (251 aa).

A divalent metal cation contacts are provided by D8, D9, S39, and N91.

It belongs to the SurE nucleotidase family. A divalent metal cation serves as cofactor.

The protein localises to the cytoplasm. It catalyses the reaction a ribonucleoside 5'-phosphate + H2O = a ribonucleoside + phosphate. Nucleotidase that shows phosphatase activity on nucleoside 5'-monophosphates. The chain is 5'-nucleotidase SurE from Halorhodospira halophila (strain DSM 244 / SL1) (Ectothiorhodospira halophila (strain DSM 244 / SL1)).